The primary structure comprises 358 residues: Methylthioribose-1-phosphate isomerase (358 aa).

Substrate-binding positions include arginine 54–alanine 56, arginine 96, and glutamine 205. The active-site Proton donor is the aspartate 246. Asparagine 256–lysine 257 contributes to the substrate binding site.

Belongs to the eIF-2B alpha/beta/delta subunits family. MtnA subfamily.

The catalysed reaction is 5-(methylsulfanyl)-alpha-D-ribose 1-phosphate = 5-(methylsulfanyl)-D-ribulose 1-phosphate. It participates in amino-acid biosynthesis; L-methionine biosynthesis via salvage pathway; L-methionine from S-methyl-5-thio-alpha-D-ribose 1-phosphate: step 1/6. In terms of biological role, catalyzes the interconversion of methylthioribose-1-phosphate (MTR-1-P) into methylthioribulose-1-phosphate (MTRu-1-P). The polypeptide is Methylthioribose-1-phosphate isomerase (Azotobacter vinelandii (strain DJ / ATCC BAA-1303)).